The following is a 224-amino-acid chain: Endoplasmic reticulum vesicle protein 25 (224 aa).

A signal peptide spans 1–25 (MIPPRSLGSTAALLLVLLFTTLASA). Over 26–190 (IKFDLPSNAH…ADTNLSTNMR (165 aa)) the chain is Lumenal. The region spanning 38–131 (TKCIWNYALS…IPVVTIDLDV (94 aa)) is the GOLD domain. Residues 191–211 (VTNFAILTLIALIALGVWQVF) traverse the membrane as a helical segment. Over 212-224 (HLRGFFKRKYLID) the chain is Cytoplasmic.

Belongs to the EMP24/GP25L family.

The protein localises to the endoplasmic reticulum membrane. It localises to the golgi apparatus membrane. In terms of biological role, constituent of COPII-coated endoplasmic reticulum-derived transport vesicles. Required for efficient transport of a subset of secretory proteins to the Golgi. Facilitates retrograde transport from the Golgi to the endoplasmic reticulum. The polypeptide is Endoplasmic reticulum vesicle protein 25 (ERV25) (Mycosarcoma maydis (Corn smut fungus)).